The primary structure comprises 70 residues: Melittin-N (70 aa).

The N-terminal stretch at 1 to 21 (MKFLVNVALVFMVVYISYIYA) is a signal peptide. Residues 22-43 (APEPEPAPEPEAEADAEADPEA) constitute a propeptide, removed by a dipeptidylpeptidase. N-formylglycine; partial is present on G44. Position 69 is a glutamine amide (Q69).

The protein belongs to the melittin family. In terms of assembly, monomer (in solution and for integration into membranes), homotetramer (in solution and potentially as a toroidal pore in membranes), and potenially homomultimer (as a toroidal pore in membranes). As to expression, expressed by the venom gland.

The protein localises to the secreted. The protein resides in the target cell membrane. Functionally, main toxin of bee venom with strong hemolytic activity and antimicrobial activity. It has enhancing effects on bee venom phospholipase A2 activity. This amphipathic toxin binds to negatively charged membrane surface and forms pore by inserting into lipid bilayers inducing the leakage of ions and molecules and the enhancement of permeability that ultimately leads to cell lysis. It acts as a voltage-gated pore with higher selectivity for anions over cations. The ion conductance has been shown to be voltage-dependent. Self-association of melittin in membranes is promoted by high ionic strength, but not by the presence of negatively charged lipids. In vivo, intradermal injection into healthy human volunteers produce sharp pain sensation and an inflammatory response. It produces pain by activating primary nociceptor cells directly and indirectly due to its ability to activate plasma membrane phospholipase A2 and its pore-forming activity. Shows lower cytotoxicity when tested on E.coli and cancer cell lines than melittin, as well as lower anti-inflammatory properties and lower properties to interact to small unilamellar liposomes. The chain is Melittin-N (MELT) from Apis cerana (Indian honeybee).